A 105-amino-acid polypeptide reads, in one-letter code: Transcriptional regulator SutA (105 aa).

Residues M1–E37 show a composition bias toward acidic residues. The disordered stretch occupies residues M1 to I105. 2 stretches are compositionally biased toward basic and acidic residues: residues A59–E83 and P92–I105.

As to quaternary structure, interacts with RNA polymerase.

In terms of biological role, causes widespread changes in gene expression, and plays a direct role in the regulation of genes encoding ribosomal components. Associates with chromosomal DNA through interaction with RNA polymerase. Contributes to biofilm formation and secondary metabolite production. Important during transitions to and from the survival state. In Pseudomonas aeruginosa (strain UCBPP-PA14), this protein is Transcriptional regulator SutA.